A 62-amino-acid chain; its full sequence is Translational regulator CsrA (62 aa).

The protein belongs to the CsrA/RsmA family. As to quaternary structure, homodimer; the beta-strands of each monomer intercalate to form a hydrophobic core, while the alpha-helices form wings that extend away from the core.

It is found in the cytoplasm. A key translational regulator that binds mRNA to regulate translation initiation and/or mRNA stability. Mediates global changes in gene expression, shifting from rapid growth to stress survival by linking envelope stress, the stringent response and the catabolite repression systems. Usually binds in the 5'-UTR; binding at or near the Shine-Dalgarno sequence prevents ribosome-binding, repressing translation, binding elsewhere in the 5'-UTR can activate translation and/or stabilize the mRNA. Its function is antagonized by small RNA(s). The chain is Translational regulator CsrA from Pasteurella multocida (strain Pm70).